Consider the following 291-residue polypeptide: ATP synthase gamma chain (291 aa).

It belongs to the ATPase gamma chain family. F-type ATPases have 2 components, CF(1) - the catalytic core - and CF(0) - the membrane proton channel. CF(1) has five subunits: alpha(3), beta(3), gamma(1), delta(1), epsilon(1). CF(0) has three main subunits: a, b and c.

The protein localises to the cell inner membrane. Functionally, produces ATP from ADP in the presence of a proton gradient across the membrane. The gamma chain is believed to be important in regulating ATPase activity and the flow of protons through the CF(0) complex. The polypeptide is ATP synthase gamma chain (Neisseria meningitidis serogroup A / serotype 4A (strain DSM 15465 / Z2491)).